Reading from the N-terminus, the 218-residue chain is Adenylate kinase (218 aa).

An ATP-binding site is contributed by 10–15 (GAGKGT). An NMP region spans residues 30 to 59 (STGDIFREAIAKGTELGRKVQDIVNSGNLV). Residues threonine 31, arginine 36, 57–59 (NLV), 85–88 (GYPR), and glutamine 92 each bind AMP. An LID region spans residues 126–163 (TRRVCSKCGKVYNVITLPSKVEGICDDCGGTLIQRDDD). Arginine 127 is a binding site for ATP. 2 residues coordinate Zn(2+): cysteine 130 and cysteine 133. 136–137 (VY) is a binding site for ATP. Zn(2+)-binding residues include cysteine 150 and cysteine 153. AMP contacts are provided by arginine 160 and arginine 171. Residue lysine 199 participates in ATP binding.

It belongs to the adenylate kinase family. In terms of assembly, monomer.

The protein resides in the cytoplasm. The catalysed reaction is AMP + ATP = 2 ADP. It participates in purine metabolism; AMP biosynthesis via salvage pathway; AMP from ADP: step 1/1. Catalyzes the reversible transfer of the terminal phosphate group between ATP and AMP. Plays an important role in cellular energy homeostasis and in adenine nucleotide metabolism. This Fervidobacterium nodosum (strain ATCC 35602 / DSM 5306 / Rt17-B1) protein is Adenylate kinase.